Consider the following 296-residue polypeptide: Fructose-bisphosphate aldolase class 1 (296 aa).

Residue Glu-175 is the Proton acceptor of the active site. Catalysis depends on Lys-212, which acts as the Schiff-base intermediate with dihydroxyacetone-P.

This sequence belongs to the class I fructose-bisphosphate aldolase family.

It carries out the reaction beta-D-fructose 1,6-bisphosphate = D-glyceraldehyde 3-phosphate + dihydroxyacetone phosphate. The protein operates within carbohydrate degradation; glycolysis; D-glyceraldehyde 3-phosphate and glycerone phosphate from D-glucose: step 4/4. This Staphylococcus aureus (strain MRSA252) protein is Fructose-bisphosphate aldolase class 1.